Reading from the N-terminus, the 97-residue chain is Large ribosomal subunit protein bL28 (97 aa).

This sequence belongs to the bacterial ribosomal protein bL28 family.

The protein is Large ribosomal subunit protein bL28 of Rickettsia rickettsii (strain Iowa).